We begin with the raw amino-acid sequence, 184 residues long: Peptide deformylase (184 aa).

Fe cation is bound by residues Cys111 and His154. Glu155 is an active-site residue. His158 contributes to the Fe cation binding site.

It belongs to the polypeptide deformylase family. Fe(2+) is required as a cofactor.

The enzyme catalyses N-terminal N-formyl-L-methionyl-[peptide] + H2O = N-terminal L-methionyl-[peptide] + formate. In terms of biological role, removes the formyl group from the N-terminal Met of newly synthesized proteins. Requires at least a dipeptide for an efficient rate of reaction. N-terminal L-methionine is a prerequisite for activity but the enzyme has broad specificity at other positions. The protein is Peptide deformylase of Lacticaseibacillus casei (strain BL23) (Lactobacillus casei).